The chain runs to 341 residues: Anthranilate phosphoribosyltransferase (341 aa).

Residues Gly-80, 83–84 (GD), Thr-88, 90–93 (NIST), 108–116 (KHGNRAMSS), and Ser-120 contribute to the 5-phospho-alpha-D-ribose 1-diphosphate site. Residue Gly-80 participates in anthranilate binding. Position 92 (Ser-92) interacts with Mg(2+). Asn-111 serves as a coordination point for anthranilate. Arg-166 is a binding site for anthranilate. Residues Asp-225 and Glu-226 each contribute to the Mg(2+) site.

The protein belongs to the anthranilate phosphoribosyltransferase family. As to quaternary structure, homodimer. It depends on Mg(2+) as a cofactor.

The enzyme catalyses N-(5-phospho-beta-D-ribosyl)anthranilate + diphosphate = 5-phospho-alpha-D-ribose 1-diphosphate + anthranilate. It functions in the pathway amino-acid biosynthesis; L-tryptophan biosynthesis; L-tryptophan from chorismate: step 2/5. In terms of biological role, catalyzes the transfer of the phosphoribosyl group of 5-phosphorylribose-1-pyrophosphate (PRPP) to anthranilate to yield N-(5'-phosphoribosyl)-anthranilate (PRA). This is Anthranilate phosphoribosyltransferase from Roseiflexus sp. (strain RS-1).